The sequence spans 753 residues: Small G protein signaling modulator 3 homolog (753 aa).

Residues 115–306 (GIPHSMRPQL…RIWDFFFYQG (192 aa)) form the Rab-GAP TBC domain. An SH3 domain is found at 482-541 (SRRRRAKALLDFERHDDDELGFRKNDIITIISQKDEHCWVGELNGLRGWFPAKFVDILDE). The 164-residue stretch at 557 to 720 (GITDLIRGTL…FAFSLSPDWE (164 aa)) folds into the RUN domain.

Belongs to the small G protein signaling modulator family.

The polypeptide is Small G protein signaling modulator 3 homolog (sgsm3) (Xenopus laevis (African clawed frog)).